A 183-amino-acid polypeptide reads, in one-letter code: Probable GTP-binding protein EngB (183 aa).

Residues 17-183 form the EngB-type G domain; that stretch reads DYPEVVFVGR…KKELLSRILN (167 aa). Residues 25 to 32, 51 to 55, 69 to 72, 137 to 140, and 166 to 168 each bind GTP; these read GRSNVGKS, GRTRA, DVPG, TKID, and SSA. Mg(2+)-binding residues include S32 and T53.

The protein belongs to the TRAFAC class TrmE-Era-EngA-EngB-Septin-like GTPase superfamily. EngB GTPase family. It depends on Mg(2+) as a cofactor.

Necessary for normal cell division and for the maintenance of normal septation. The sequence is that of Probable GTP-binding protein EngB from Aquifex aeolicus (strain VF5).